The chain runs to 584 residues: Interferon regulatory factor 2-binding protein 1 (584 aa).

The tract at residues 59–120 (HVLPEGRSPG…RYDRATSSSR (62 aa)) is disordered. At Ser-66 the chain carries Phosphoserine. Over residues 82–100 (STGSQGSQLPPPQAQAQPS) the composition is skewed to low complexity. Phosphoserine is present on Ser-125. Position 177 is an omega-N-methylarginine (Arg-177). The residue at position 186 (Ser-186) is a Phosphoserine. The stretch at 197-217 (EKEKQQRNADCLAELNEAMRG) forms a coiled coil. A Glycyl lysine isopeptide (Lys-Gly) (interchain with G-Cter in SUMO2) cross-link involves residue Lys-227. 2 disordered regions span residues 346–421 (PAEA…GVPS) and 433–495 (LGHS…GTGA). A compositionally biased stretch (pro residues) spans 354-369 (YPEPAPAALCGPPPRA). A phosphoserine mark is found at Ser-371, Ser-384, Ser-421, and Ser-436. Residue Lys-438 forms a Glycyl lysine isopeptide (Lys-Gly) (interchain with G-Cter in SUMO2) linkage. A compositionally biased stretch (low complexity) spans 449-458 (AGGASPAASS). Ser-453 and Ser-457 each carry phosphoserine. The segment at 503–550 (CTLCRERLEDTHFVQCPSVPGHKFCFPCSREFIKAQGPAGEVYCPSGD) adopts an RING-type; degenerate zinc-finger fold. Residues 503 to 550 (CTLCRERLEDTHFVQCPSVPGHKFCFPCSREFIKAQGPAGEVYCPSGD) are cys-rich.

It belongs to the IRF2BP family. As to quaternary structure, interacts with IRF2. Part of a corepressor complex containing IRF2 and IRF2BP2. Interacts with JDP2.

The protein resides in the nucleus. The enzyme catalyses S-ubiquitinyl-[E2 ubiquitin-conjugating enzyme]-L-cysteine + [acceptor protein]-L-lysine = [E2 ubiquitin-conjugating enzyme]-L-cysteine + N(6)-ubiquitinyl-[acceptor protein]-L-lysine.. Its function is as follows. Acts as a transcriptional corepressor in a IRF2-dependent manner; this repression is not mediated by histone deacetylase activities. May act as an E3 ligase towards JDP2, enhancing its polyubiquitination. Represses ATF2-dependent transcriptional activation. This is Interferon regulatory factor 2-binding protein 1 (Irf2bp1) from Mus musculus (Mouse).